We begin with the raw amino-acid sequence, 40 residues long: Lucifensin (40 aa).

3 disulfide bridges follow: cysteine 3–cysteine 30, cysteine 16–cysteine 36, and cysteine 20–cysteine 38.

It belongs to the invertebrate defensin family. Type 1 subfamily. Post-translationally, the disulfide bonds are essential for antimicrobial activity. Larval fat body, hemolymph and salivary glands (at protein level).

The protein localises to the secreted. In terms of biological role, shows strong antibacterial activity against the Gram-positive bacterium M.luteus. Also shows antibacterial activity against the Gram-positive bacteria E.fecalis, S.aureus, S.carnosus, S.pneumoniae and S.pyogenes and against a number of methicillin-resistant S.aureus and glycopeptide-intermediate S.aureus isolates. Does not show antibacterial activity against Gram-negative bacteria or antifungal activity against C.utilis. Shows slight antifungal activity against C.albicans. This Lucilia cuprina (Green bottle fly) protein is Lucifensin.